Here is a 384-residue protein sequence, read N- to C-terminus: Carbamoyl phosphate synthase small chain (384 aa).

A CPSase region spans residues 1 to 192; that stretch reads MPIAAAKPAL…FGPVAEQQGQ (192 aa). The L-glutamine site is built by Ser51, Gly244, and Gly246. Positions 196 to 381 constitute a Glutamine amidotransferase type-1 domain; it reads TVVALDFGVK…VKLMRQQKAE (186 aa). Cys272 (nucleophile) is an active-site residue. Positions 273, 276, 312, 314, and 315 each coordinate L-glutamine. Active-site residues include His354 and Glu356.

This sequence belongs to the CarA family. In terms of assembly, composed of two chains; the small (or glutamine) chain promotes the hydrolysis of glutamine to ammonia, which is used by the large (or ammonia) chain to synthesize carbamoyl phosphate. Tetramer of heterodimers (alpha,beta)4.

The catalysed reaction is hydrogencarbonate + L-glutamine + 2 ATP + H2O = carbamoyl phosphate + L-glutamate + 2 ADP + phosphate + 2 H(+). The enzyme catalyses L-glutamine + H2O = L-glutamate + NH4(+). The protein operates within amino-acid biosynthesis; L-arginine biosynthesis; carbamoyl phosphate from bicarbonate: step 1/1. Its pathway is pyrimidine metabolism; UMP biosynthesis via de novo pathway; (S)-dihydroorotate from bicarbonate: step 1/3. Functionally, small subunit of the glutamine-dependent carbamoyl phosphate synthetase (CPSase). CPSase catalyzes the formation of carbamoyl phosphate from the ammonia moiety of glutamine, carbonate, and phosphate donated by ATP, constituting the first step of 2 biosynthetic pathways, one leading to arginine and/or urea and the other to pyrimidine nucleotides. The small subunit (glutamine amidotransferase) binds and cleaves glutamine to supply the large subunit with the substrate ammonia. In Synechocystis sp. (strain ATCC 27184 / PCC 6803 / Kazusa), this protein is Carbamoyl phosphate synthase small chain.